A 241-amino-acid polypeptide reads, in one-letter code: Pyridoxal phosphate phosphatase PHOSPHO2 (241 aa).

The active-site Nucleophile is the D8. Mg(2+) contacts are provided by D8 and D10. D10 functions as the Proton donor in the catalytic mechanism. Substrate contacts are provided by D19 and D99. A Mg(2+)-binding site is contributed by D179.

Belongs to the HAD-like hydrolase superfamily. PHOSPHO family. Mg(2+) is required as a cofactor.

The catalysed reaction is pyridoxal 5'-phosphate + H2O = pyridoxal + phosphate. In terms of biological role, phosphatase that has high activity toward pyridoxal 5'-phosphate (PLP). Also active at much lower level toward pyrophosphate, phosphoethanolamine (PEA), phosphocholine (PCho), phospho-l-tyrosine, fructose-6-phosphate, p-nitrophenyl phosphate, and h-glycerophosphate. The sequence is that of Pyridoxal phosphate phosphatase PHOSPHO2 (Phospho2) from Mus musculus (Mouse).